Here is a 354-residue protein sequence, read N- to C-terminus: DNA integrity scanning protein DisA (354 aa).

The DAC domain maps to 6–144; that stretch reads DDELKKILKI…GDIKYVLRDS (139 aa). ATP contacts are provided by residues G73, L91, and 104 to 108; that span reads TRHRT.

The protein belongs to the DisA family. As to quaternary structure, homooctamer. It depends on Mg(2+) as a cofactor.

It catalyses the reaction 2 ATP = 3',3'-c-di-AMP + 2 diphosphate. Its function is as follows. Participates in a DNA-damage check-point that is active prior to asymmetric division when DNA is damaged. DisA forms globular foci that rapidly scan along the chromosomes during sporulation, searching for lesions. When a lesion is present, DisA pauses at the lesion site. This triggers a cellular response that culminates in a temporary block in sporulation initiation. In terms of biological role, also has diadenylate cyclase activity, catalyzing the condensation of 2 ATP molecules into cyclic di-AMP (c-di-AMP). c-di-AMP acts as a signaling molecule that couples DNA integrity with progression of sporulation. The rise in c-di-AMP level generated by DisA while scanning the chromosome, operates as a positive signal that advances sporulation; upon encountering a lesion, the DisA focus arrests at the damaged site and halts c-di-AMP synthesis. The protein is DNA integrity scanning protein DisA of Clostridium perfringens (strain 13 / Type A).